Reading from the N-terminus, the 563-residue chain is Choline transporter (563 aa).

The interval 1 to 25 (MSIRNDNASGGYMQPDQSSNASMHK) is disordered. At 1–57 (MSIRNDNASGGYMQPDQSSNASMHKRDLRVEEEIKPLDDMDSKGAVAADGEVHLRKS) the chain is on the extracellular side. Asparagine 7 and asparagine 20 each carry an N-linked (GlcNAc...) asparagine glycan. Phosphoserine is present on residues serine 22 and serine 42. A helical membrane pass occupies residues 58–78 (FSLWSILGVGFGLTNSWFGIS). Residues 79-87 (TSMVAGISS) are Cytoplasmic-facing. The chain crosses the membrane as a helical span at residues 88 to 108 (GGPMMIVYGIIIVALISICIG). Topologically, residues 109–182 (TSLGELSSAY…LTHPEFIPKR (74 aa)) are extracellular. Residues 183–203 (WHIFVCFELLHLFLMFFNCYG) form a helical membrane-spanning segment. Over 204-205 (KS) the chain is Cytoplasmic. The helical transmembrane segment at 206 to 226 (LPIISSSSLYISLLSFFTITI) threads the bilayer. The Extracellular segment spans residues 227–255 (TVLACSHGKFNDAKFVFATFNNETGWKNG). A glycan (N-linked (GlcNAc...) asparagine) is linked at asparagine 248. Residues 256–276 (GIAFIVGLINPAWSFSCLDCA) traverse the membrane as a helical segment. Topologically, residues 277-293 (THMAFEVEKPERVIPIA) are cytoplasmic. A helical transmembrane segment spans residues 294-314 (IMGTVAIGFVTSFCYVIAMFF). The Extracellular portion of the chain corresponds to 315–342 (SIQDLDAVLSSTTGAPILDIYNQALGNK). N-linked (GlcNAc...) asparagine glycosylation occurs at asparagine 341. The chain crosses the membrane as a helical span at residues 343 to 363 (SGAIFLGCLILFTSFGCVIAC). At 364 to 398 (HTWQARLCWSFARDNGLPLSRLWSQVNPHTGVPLN) the chain is on the cytoplasmic side. Residues 399–417 (AHLMSCAWITLIGLLYLAS) traverse the membrane as a helical segment. Residues 418–426 (STAFQSLIT) lie on the Extracellular side of the membrane. A helical transmembrane segment spans residues 427–445 (GCIAFLLLSYIIPVICLLA). Topologically, residues 446 to 465 (KKRNIAHGPFWLGKFGFFSN) are cytoplasmic. Residues 466 to 486 (IVLLGWTVFSVVFFSFPPVLP) traverse the membrane as a helical segment. Residues 487 to 491 (VTKDN) lie on the Extracellular side of the membrane. A helical membrane pass occupies residues 492 to 512 (MNYVCVVIVGYTAYSILYWKY). Over 513–563 (KGKKEFHALEESENEQAEYSNNFDTIEDSREFSVAASDVELENEHVPWGKK) the chain is Cytoplasmic.

Belongs to the amino acid-polyamine-organocation (APC) superfamily. Amino acid/choline transporter (ACT) (TC 2.A.3.4) family.

It is found in the membrane. The enzyme catalyses choline(out) = choline(in). The catalysed reaction is ethanolamine(in) = ethanolamine(out). Sole choline transporter in yeast. Also transports ethanolamine. This Saccharomyces cerevisiae (strain ATCC 204508 / S288c) (Baker's yeast) protein is Choline transporter (HNM1).